A 1271-amino-acid chain; its full sequence is Clustered mitochondria protein homolog (1271 aa).

TPR repeat units follow at residues Arg104–Glu138 and Cys502–Lys535. The region spanning Asp329–Ile580 is the Clu domain. Residues Gln729–Glu763 are compositionally biased toward basic and acidic residues. Positions Gln729 to Phe783 are disordered. TPR repeat units follow at residues Ile1067 to Val1100, Val1109 to Ile1142, and Ala1151 to His1184. Residues Gln1212–Lys1271 are disordered. The segment covering Lys1241–Asn1253 has biased composition (polar residues). Low complexity predominate over residues Ser1254–Arg1263.

This sequence belongs to the CLU family. In terms of assembly, may associate with the eukaryotic translation initiation factor 3 (eIF-3) complex.

Its subcellular location is the cytoplasm. Functionally, mRNA-binding protein involved in proper cytoplasmic distribution of mitochondria. The sequence is that of Clustered mitochondria protein homolog from Meyerozyma guilliermondii (strain ATCC 6260 / CBS 566 / DSM 6381 / JCM 1539 / NBRC 10279 / NRRL Y-324) (Yeast).